Consider the following 198-residue polypeptide: Hookworm platelet inhibitor 1 (198 aa).

The N-terminal stretch at M1–A17 is a signal peptide. 5 disulfides stabilise this stretch: C24/C65, C78/C146, C141/C154, C174/C186, and C177/C195.

It belongs to the CRISP family. In terms of assembly, monomer. As to expression, detected in cephalic glands.

It localises to the secreted. Hookworms inhibitor of platelet aggregation and adhesion. Native protein inhibits platelet aggregation induced by ADP, epinephrine, and thrombin. In addition, it prevents adhesion of resting platelets to immobilized fibrinogen and collagen. May act by binding to glycoprotein IIb/IIIa (ITGA2B/ITGB3) and integrin alpha-2/beta-1 (ITGA1/ITGB1), respectively. It is noteworthy that the recombinant protein fails to inhibit binding to fibrinogen (through ITGA2B/ITGB3) and collagen (through ITGA1/ITGB1). This Ancylostoma caninum (Dog hookworm) protein is Hookworm platelet inhibitor 1.